Reading from the N-terminus, the 70-residue chain is Potassium channel toxin kappa-KTx 2.5 (70 aa).

The signal sequence occupies residues 1–26 (MESSRKSYVLMLFLAFVIMNVCSVSG). Residues 27–42 (EPKDGEIAGFEMEEAR) constitute a propeptide that is removed on maturation. 2 cysteine pairs are disulfide-bonded: Cys-46–Cys-64 and Cys-50–Cys-60.

It belongs to the short scorpion toxin superfamily. Potassium channel inhibitor kappa-KTx family. Kappa-KTx 2 subfamily. In terms of tissue distribution, expressed by the venom gland.

Its subcellular location is the secreted. Its function is as follows. Voltage-independently blocks potassium currents on hKv1.1/KCNA1 (IC(50)=217 uM), and hKv1.4/KCNA4 (IC(50)=71 uM) (expressed in CHO cells). The protein is Potassium channel toxin kappa-KTx 2.5 of Opisthacanthus cayaporum (South American scorpion).